Here is a 245-residue protein sequence, read N- to C-terminus: Transmembrane and ubiquitin-like domain-containing protein 1 (245 aa).

Positions 2 to 30 (ALIEGVGDEVTVLFAVLACLLVLALAWVS) are required to release iHOPS from membranes. Residues 11–31 (VTVLFAVLACLLVLALAWVST) form a helical membrane-spanning segment. Positions 33 to 100 (TTESTDPQPQ…ASTPPDSPQE (68 aa)) are disordered. 3 positions are modified to phosphoserine: Ser-73, Ser-97, and Ser-126. Residues 102 to 175 (LLLRLKFLND…LHCHVSTRVG (74 aa)) form the Ubiquitin-like domain. Helical transmembrane passes span 194–214 (IGSL…YCQI) and 219–239 (FFPL…SLLA).

Interacts with EEF1A1, CAMLG, GRIA2 and GRIP1. Interacts with NPM1 and CDKN2A; TMUB1 can enhance interaction between NPM1 and CDKN2A and is proposed to bridge the proteins; proposed to be mediated by iHOPS. Interacts with TUBG1. Interacts with ERLIN2 and AMFR; TMUB1 promotes the interaction of ERLIN2 with AMFR. In terms of processing, isoform 1 (lHOPS) is processed by regulated intramembrane proteolysis (RIP) in the N-terminus to release iHOPS from membranes. Post-translationally, isoform 2 seems to undergo a selective cleavage in the C-terminal region to release an additional cytoplasmic form. Expressed in adult brain; at protein level. Isoform 1 (lHOPS) is highly expressed in small intestine, stomach and epididymis. Isoform 2 (sHOPS) and iHOPS are abundantly expressed in brain, liver and adrenal gland.

The protein localises to the membrane. Its subcellular location is the postsynaptic cell membrane. It localises to the recycling endosome. The protein resides in the cytoplasm. It is found in the nucleus. The protein localises to the nucleolus. Its subcellular location is the cytoskeleton. It localises to the microtubule organizing center. The protein resides in the centrosome. Functionally, involved in sterol-regulated ubiquitination and degradation of HMG-CoA reductase HMGCR. Involved in positive regulation of AMPA-selective glutamate receptor GRIA2 recycling to the cell surface. Acts as a negative regulator of hepatocyte growth during regeneration. May contribute to the regulation of translation during cell-cycle progression. May contribute to the regulation of cell proliferation. May be involved in centrosome assembly. Modulates stabilization and nucleolar localization of tumor suppressor CDKN2A and enhances association between CDKN2A and NPM1. This is Transmembrane and ubiquitin-like domain-containing protein 1 (Tmub1) from Mus musculus (Mouse).